We begin with the raw amino-acid sequence, 195 residues long: ATP-dependent Clp protease proteolytic subunit (195 aa).

S98 serves as the catalytic Nucleophile. Residue H123 is part of the active site.

This sequence belongs to the peptidase S14 family. Fourteen ClpP subunits assemble into 2 heptameric rings which stack back to back to give a disk-like structure with a central cavity, resembling the structure of eukaryotic proteasomes.

It is found in the cytoplasm. It carries out the reaction Hydrolysis of proteins to small peptides in the presence of ATP and magnesium. alpha-casein is the usual test substrate. In the absence of ATP, only oligopeptides shorter than five residues are hydrolyzed (such as succinyl-Leu-Tyr-|-NHMec, and Leu-Tyr-Leu-|-Tyr-Trp, in which cleavage of the -Tyr-|-Leu- and -Tyr-|-Trp bonds also occurs).. In terms of biological role, cleaves peptides in various proteins in a process that requires ATP hydrolysis. Has a chymotrypsin-like activity. Plays a major role in the degradation of misfolded proteins. The sequence is that of ATP-dependent Clp protease proteolytic subunit from Thermoanaerobacter pseudethanolicus (strain ATCC 33223 / 39E) (Clostridium thermohydrosulfuricum).